The chain runs to 1146 residues: MGETIASKEMHEYFDELEARLKKAIEIANTARARGGDPKPVVEIPLAKDLADRVENLIGVEGVAAKIRVLEEKMSREECALEIGRQVAEGEVGNFATKKDAVEAAIRVSMAVITEGVVAAPIEGINKVELGKNDDGSEYIRIFYSGPIRSAGGTAQALSVLVGDYVRRGIGIDRYKPRPEEVERYVEEIVLYKRVASLQYMPSEDEIRLIVKNCPVCIDGDPTEEAEVEGHRNLERIGTNRIRGGMCLVLAEGLALKAPKVKKHVNKLNMDGWDWLDILIGGAKTGGDEEDEKKNKIKPKDKYIRDLIAGRPVFSHPSRPGGFRLRYGRSRNTSFAAAGINPSTMVLLDDFITNGTQLKVERPGKAAAMSAVDSIEGPTVRLYSGDLVRIDDIKEAYELRSQVEVIVDIGEILINYGDFLENNHPLMPSPYVFEWWRYDYEAACSEIIPEDELKDPSSALALRLAEEYDVPLHPKFTYLWHDINRTEFEALRKFVVGRGNFSVEDEILRLPLKACIENGVKLILEKLLVLHRVKADTILIKEALPFILCLGLDCHLKEKAPMPDTDNMVNATAFLSGFKVLPRAPSRIGARMGRPEKANLRKMSPAAQVLFPIGNAGGLTRNLVSASNYSVSMNGKIGEIEVEMGIRECPACGKETYFWRCDCGEYTRPKLFCPRCKIEVRNSETCPKCGRKPTSVSNVKLDFRSIYKRAFENVGEREKMDLIKGVKRLMNGQMTPEPLEKGILRAKHDVYIFKDGTVRYDMSDIPLTHVRADEIGITAAKLRELGYVEDIYGNPLERDDQIVCLKVQDLVISYDGGGYMLRTAQYVDDLLVKYYGVEPYYNAKTIQDLVGVLLIGLAPHTSAGVLGRLIGFTRASVGYAHPFFHASKRRNCDGDEDCVMLLMDGILNFSRAYLPEKRGGKMDAPLVLTTRIDPKEVDKEAHNIDLPARYPLEFYRATQEIKNPTELEGIMDLVSSRLGTPEQYEHFMFTHDTSDIAAGPLNSSYKTLGSMIDKMEAQLSLANKIRAVDAPDVAERVLKSHFLPDLLGNLRSFSRQRMRCIKCGAKFRRPPLTGACPKCGGNVVLTVHEGAVRKYLEISKEIGKRYGVSSYTQQRIELLDKDICSLFENHRVKQLGISDFMSGSAR.

This sequence belongs to the archaeal DNA polymerase II family. As to quaternary structure, heterodimer of a large subunit and a small subunit.

It carries out the reaction DNA(n) + a 2'-deoxyribonucleoside 5'-triphosphate = DNA(n+1) + diphosphate. The enzyme catalyses Exonucleolytic cleavage in the 3'- to 5'-direction to yield nucleoside 5'-phosphates.. Functionally, possesses two activities: a DNA synthesis (polymerase) and an exonucleolytic activity that degrades single-stranded DNA in the 3'- to 5'-direction. Has a template-primer preference which is characteristic of a replicative DNA polymerase. This is DNA polymerase II large subunit from Methanosarcina barkeri (strain Fusaro / DSM 804).